The following is a 372-amino-acid chain: Protein phosphatase 1 regulatory subunit 42 (372 aa).

7 LRR repeats span residues 30-51 (RITH…TMCR), 52-71 (NLTV…NLGS), 72-93 (NLTH…SGLK), 94-115 (RLEK…EGLR), 116-137 (ELRE…LFDP), 146-167 (SLSV…AVLE), and 168-189 (NLTQ…EFVL). Residues 203–241 (NPVCLKPKYREKVTIISKTLEILDGKEIKEMARQFLLNW) form the LRRCT domain.

The protein localises to the cytoplasm. Its subcellular location is the cytoskeleton. It localises to the microtubule organizing center. The protein resides in the centrosome. Its function is as follows. May regulate phosphatase activity of protein phosphatase 1 (PP1) complexes. The protein is Protein phosphatase 1 regulatory subunit 42 (ppp1r42) of Xenopus laevis (African clawed frog).